Consider the following 358-residue polypeptide: 3-dehydroquinate synthase (358 aa).

NAD(+) contacts are provided by residues 70 to 75, 104 to 108, 128 to 129, K141, K150, and 168 to 171; these read DGEQYK, GVIGD, TT, and CLHT. 3 residues coordinate Zn(2+): E183, H246, and H263.

The protein belongs to the sugar phosphate cyclases superfamily. Dehydroquinate synthase family. The cofactor is Co(2+). Zn(2+) serves as cofactor. NAD(+) is required as a cofactor.

The protein localises to the cytoplasm. It catalyses the reaction 7-phospho-2-dehydro-3-deoxy-D-arabino-heptonate = 3-dehydroquinate + phosphate. The protein operates within metabolic intermediate biosynthesis; chorismate biosynthesis; chorismate from D-erythrose 4-phosphate and phosphoenolpyruvate: step 2/7. Its function is as follows. Catalyzes the conversion of 3-deoxy-D-arabino-heptulosonate 7-phosphate (DAHP) to dehydroquinate (DHQ). This chain is 3-dehydroquinate synthase, found in Shewanella loihica (strain ATCC BAA-1088 / PV-4).